The chain runs to 250 residues: NADH-quinone oxidoreductase subunit C (250 aa).

This sequence belongs to the complex I 30 kDa subunit family. NDH-1 is composed of 14 different subunits. Subunits NuoB, C, D, E, F, and G constitute the peripheral sector of the complex.

The protein localises to the cell inner membrane. The catalysed reaction is a quinone + NADH + 5 H(+)(in) = a quinol + NAD(+) + 4 H(+)(out). Functionally, NDH-1 shuttles electrons from NADH, via FMN and iron-sulfur (Fe-S) centers, to quinones in the respiratory chain. The immediate electron acceptor for the enzyme in this species is believed to be ubiquinone. Couples the redox reaction to proton translocation (for every two electrons transferred, four hydrogen ions are translocated across the cytoplasmic membrane), and thus conserves the redox energy in a proton gradient. The sequence is that of NADH-quinone oxidoreductase subunit C from Xylella fastidiosa (strain 9a5c).